The chain runs to 70 residues: Large ribosomal subunit protein uL29 (70 aa).

Belongs to the universal ribosomal protein uL29 family.

This Prochlorococcus marinus (strain MIT 9303) protein is Large ribosomal subunit protein uL29.